Reading from the N-terminus, the 252-residue chain is Clc-like protein 2 (252 aa).

The next 4 membrane-spanning stretches (helical) occupy residues 7–29 (YAIL…TPAW), 91–111 (LFHI…SFCV), 127–147 (VFLV…AVYS), and 173–193 (IALT…VHVL).

It belongs to the Clc family.

It is found in the membrane. In Caenorhabditis elegans, this protein is Clc-like protein 2 (clc-2).